The sequence spans 101 residues: Cilia- and flagella-associated protein 141 (101 aa).

In terms of assembly, microtubule inner protein component of sperm flagellar doublet microtubules. As to expression, expressed in trachea multiciliated cells.

It localises to the cytoplasm. Its subcellular location is the cytoskeleton. The protein resides in the cilium axoneme. The protein localises to the flagellum axoneme. Its function is as follows. Microtubule inner protein (MIP) part of the dynein-decorated doublet microtubules (DMTs) in cilia axoneme, which is required for motile cilia beating. The chain is Cilia- and flagella-associated protein 141 from Bos taurus (Bovine).